The sequence spans 3295 residues: Toxin CdiA (3295 aa).

Residues 33–366 (PSSGVGHTQR…GKGNTQLTTA (334 aa)) form a two-partner system transport domain (TPS) region. Residues 55-75 (LLIALGCISLSAQAAIVADGS) traverse the membrane as a helical segment. The tract at residues 353–1574 (GVLYGKGNTQ…LLVYAKTLTN (1222 aa)) is FHA-1. The disordered stretch occupies residues 1165-1185 (PPSSIPPSSTQSSSTQASASP). The segment at 1575-1796 (RRQILTATTD…LKTDKGDYAP (222 aa)) is receptor binding domain (RBD). The YP domain stretch occupies residues 1797 to 1977 (GPEAALSLAN…GVKPGDLRAN (181 aa)). The tract at residues 1806–1831 (NISPPSSLDATGPRGVPPPSDDLNRT) is disordered. Positions 1998 to 2035 (GAISASNNLQISMAKDITLNNRCGLLQAGNHLQLSTLN) are periplasmic FHA-1 repeat (pFR). The segment at 2022–2676 (LLQAGNHLQL…DRDNYDAKQS (655 aa)) is FHA-2. Disordered stretches follow at residues 2260-2292 (TSQT…EGRS) and 2823-2847 (QQNV…FDKE). Residues 2823–2838 (QQNVDDLSRDTGNANG) show a composition bias toward polar residues. The VENN CT cleavage motif signature appears at 3073–3076 (VENN). A CT domain region spans residues 3073–3295 (VENNLLGGNE…QKKDAMEDSK (223 aa)). Residues 3276-3295 (SSEFGSSLIQQKKDAMEDSK) are disordered. The segment covering 3286–3295 (QKKDAMEDSK) has biased composition (basic and acidic residues).

The protein in the N-terminal section; belongs to the CdiA toxin family. As to quaternary structure, probably interacts with cognate immunity protein CdiI.

It localises to the membrane. The protein resides in the target cell. Its subcellular location is the target cell cytoplasm. Its function is as follows. Toxic component of a toxin-immunity protein module, which functions as a cellular contact-dependent growth inhibition (CDI) system. CDI modules allow bacteria to communicate with and inhibit the growth of closely related neighboring bacteria in a contact-dependent fashion. CDI is neutralized by its cognate immunity protein CdiI, but not by non-cognate CdiI from other bacteria. Functionally, the CdiA protein is thought to be exported from the cell through the central lumen of CdiB, the other half of its two-partner system (TPS). The TPS domain probably remains associated with CdiB while the FHA-1 domain forms an extended filament with the receptor-binding domain (RBD) at its extremity; in the secretion arrested state the C-terminus of the RBD and YP domains form a hairpin-like structure as the FHA-2, PT and CT domains are periplasmic. The YP domain is probably responsible for this arrest at the point where it re-enters the host cell periplasm. Upon binding to a target cell outer membrane receptor a signal is transmitted to activate secretion. The filament elongates slightly, the rest of CdiA is secreted and the FHA-2 domain becomes stably associated with the target cell's outer membrane where it facilitates entry of the toxic CT domain into the target cell periplasm. From there the toxic CT domain is cleaved and gains access to the target cell cytoplasm via an inner membrane protein. The protein is Toxin CdiA of Yersinia pestis.